A 652-amino-acid chain; its full sequence is Protein high chlorophyll fluorescent 107 (652 aa).

Disordered stretches follow at residues 1 to 21 (MHFFFVPNSSSSSPSPANTSS) and 78 to 121 (VFSP…EGKK). The transit peptide at 1–68 (MHFFFVPNSS…TFSSKNTYLY (68 aa)) directs the protein to the chloroplast. Basic and acidic residues predominate over residues 105–121 (PLLENSDKESSEEEGKK). 12 TPR repeats span residues 168–201 (LDLSLYKAKVLARNFRYKDAEKILEKCIAYWPED), 202–235 (GRPYVALGKILSKQSKLAEARILYEKGCQSTQGE), 237–270 (SYIWQCWAVLENRLGNVRRARELFDAATVADKKH), 271–304 (VAAWHGWANLEIKQGNISKARNLLAKGLKFCGRN), 305–338 (EYIYQTLALLEAKAGRYEQARYLFKQATICNSRS), 339–372 (CASWLAWAQLEIQQERYPAARKLFEKAVQASPKN), 374–406 (FAWHVWGVFEAGVGNVERGRKLLKIGHALNPRD), 407–440 (PVLLQSLGLLEYKHSSANLARALLRRASELDPRH), 441–474 (QPVWIAWGWMEWKEGNTTTARELYQRALSIDANT), 478–511 (SRCLQAWGVLEQRAGNLSAARRLFRSSLNINSQS), 543–576 (TEVVDDASWVTGFLDIIDPALDTVKRLLNFGQNN), and 598–631 (QQPESSAGREDIETGSGFNLDVFLRSKLSLDPLK). Residues 585 to 610 (LRNMNRTKDSQSNQQPESSAGREDIE) are disordered.

May form homomultimers. Part of a multi-subunit complex in the range of 60-190 and 600-800 kDa in chloroplast membranes.

The protein localises to the plastid. Its subcellular location is the chloroplast. The protein resides in the chloroplast membrane. It localises to the chloroplast stroma. Its function is as follows. Involved, directly or indirectly, in the processing of chloroplast encoded mRNAs. Exhibits sequence-specific RNA binding and RNA remodeling activities, probably leading to the activation of translation of the target gene cluster psbB-psbT-psbH-petB-petD. Blocks 5'-3' and 3'-5' exoribonucleases (e.g. polynucleotide phosphorylase (PNPase), RNase R) in vitro. Necessary for intercistronic RNA processing of the psbH 5' untranslated region or the stabilization of 5' processed psbH RNAs. Also required for the synthesis of psbB. This is Protein high chlorophyll fluorescent 107 from Arabidopsis thaliana (Mouse-ear cress).